The primary structure comprises 751 residues: Polyribonucleotide nucleotidyltransferase (751 aa).

Residues Asp-528 and Asp-534 each contribute to the Mg(2+) site. Residues 594–653 form the KH domain; the sequence is PRVISVTVPVSKIGEVIGPKGKMINQIQEDTGTDISIEDDGTVYIGATDGPSAEAARSAI. Residues 665 to 737 form the S1 motif domain; the sequence is GERYLGTVVK…DRGKLSLAPV (73 aa).

It belongs to the polyribonucleotide nucleotidyltransferase family. The cofactor is Mg(2+).

Its subcellular location is the cytoplasm. The catalysed reaction is RNA(n+1) + phosphate = RNA(n) + a ribonucleoside 5'-diphosphate. Involved in mRNA degradation. Catalyzes the phosphorolysis of single-stranded polyribonucleotides processively in the 3'- to 5'-direction. This chain is Polyribonucleotide nucleotidyltransferase, found in Kocuria rhizophila (strain ATCC 9341 / DSM 348 / NBRC 103217 / DC2201).